The following is a 152-amino-acid chain: Ninjurin-1 (152 aa).

N-acetylmethionine is present on M1. The segment covering 1–10 (MESGTEEYEL) has biased composition (acidic residues). The interval 1-29 (MESGTEEYELNGDLRPGSPGSPDALPPRW) is disordered. Residues 1–78 (MESGTEEYEL…EQGNDFAFFV (78 aa)) are Extracellular-facing. S18 and S21 each carry phosphoserine. The interval 26-37 (PPRWGLRNRPIN) is N-terminal adhesion motif. Residues 40-69 (HYANKKSAAESMLDIALLMANASQLKAVVE) form a required to induce plasma membrane rupture region. Positions 44 to 55 (KKSAAESMLDIA) are helix alpha1. Positions 58 to 74 (MANASQLKAVVEQGNDF) are helix alpha2. The N-linked (GlcNAc...) asparagine glycan is linked to N60. Residues 79-103 (PLVVLISISLVLQIGVGVLLIFLVK) traverse the membrane as a helical segment. Topologically, residues 104-113 (YDLNNPAKHA) are cytoplasmic. A helical membrane pass occupies residues 114–138 (KLDFLNNLATGLVFIIVVVNIFITA). Topologically, residues 139–152 (FGVQKPVMDVAPRQ) are extracellular.

It belongs to the ninjurin family. As to quaternary structure, homodimer; in absence of death stimuli, forms an inactive homodimer. Homooligomer; in response to death stimuli, homooligomerizes into long, highly branched filaments and large, ring-shaped structures in the membrane. Cleaved by MMP9 protease to generate the Secreted ninjurin-1 form. In terms of processing, N-linked glycosylation is required for homooligomerization.

It is found in the cell membrane. Its subcellular location is the synaptic cell membrane. The protein resides in the secreted. With respect to regulation, in response to death stimuli, homooligomerizes and disrupts membrane integrity by introducing the hydrophilic faces of alpha1 and alpha2 helices into the hydrophobic membrane. Homooligomerization and ability to mediate plasma membrane rupture is inhibited by glycine; it is unclear whether glycine directly or indirectly inhibits homooligomerization. In normal conditions, NINJ1 is autoinhibited via formation of a homodimer: in the inactive homodimer, the alpha1 and alpha2 helices (residues 44-74) form a single transmembrane region without a kink, in which hydrophilic faces of alpha1 and alpha2 helices are sequestered. Functionally, effector of various programmed cell death, such as pyroptosis and necroptosis, which mediates plasma membrane rupture (cytolysis). Oligomerizes in response to death stimuli and forms ring-like structures on the plasma membrane: acts by cutting and shedding membrane disks, like a cookie cutter, leading to membrane damage and loss that cannot be repaired by the cell. Plasma membrane rupture leads to release intracellular molecules named damage-associated molecular patterns (DAMPs) that propagate the inflammatory response. Mechanistically, mediates plasma membrane rupture by introducing hydrophilic faces of 2 alpha helices into the hydrophobic membrane. Induces plasma membrane rupture downstream of Gasdermin (GSDMA, GSDMB, GSDMC, GSDMD, or GSDME) or MLKL during pyroptosis or necroptosis, respectively. Acts as an effector of PANoptosis downstream of CASP1, CASP4, CASP8 and RIPK3. Also induces plasma membrane rupture in response to cell swelling caused by osmotic stress and ferroptosis downstream of lipid peroxidation. Acts as a regulator of Toll-like receptor 4 (TLR4) signaling triggered by lipopolysaccharide (LPS) during systemic inflammation; directly binds LPS. Involved in leukocyte migration during inflammation by promoting transendothelial migration of macrophages via homotypic binding. Promotes the migration of monocytes across the brain endothelium to central nervous system inflammatory lesions. Also acts as a homophilic transmembrane adhesion molecule involved in various processes such as axonal growth, cell chemotaxis and angiogenesis. Promotes cell adhesion by mediating homophilic interactions via its extracellular N-terminal adhesion motif (N-NAM). Involved in the progression of the inflammatory stress by promoting cell-to-cell interactions between immune cells and endothelial cells. Plays a role in nerve regeneration by promoting maturation of Schwann cells. Acts as a regulator of angiogenesis. Promotes the formation of new vessels by mediating the interaction between capillary pericyte cells and endothelial cells. Also mediates vascular functions in penile tissue as well as vascular formation. Promotes osteoclasts development by enhancing the survival of prefusion osteoclasts. Also involved in striated muscle growth and differentiation. Also involved in cell senescence in a p53/TP53 manner, possibly by acting as an indirect regulator of p53/TP53 mRNA translation. Secreted form generated by cleavage, which has chemotactic activity. Acts as an anti-inflammatory mediator by promoting monocyte recruitment, thereby ameliorating atherosclerosis. This chain is Ninjurin-1, found in Mus musculus (Mouse).